The chain runs to 352 residues: Small glutamine-rich tetratricopeptide repeat-containing protein 2 (352 aa).

Residues 80 to 97 (PAAASSSSTAPAAAAATP) are compositionally biased toward low complexity. Residues 80 to 103 (PAAASSSSTAPAAAAATPSDEDLA) form a disordered region. TPR repeat units follow at residues 105 to 138 (AEQL…NPNS), 140 to 172 (VYFS…DPKF), and 173 to 206 (GKAY…DPSN). Residues 217–236 (KEQLSSSSSSNANDATASRG) form a disordered region.

This sequence belongs to the SGT family.

Its function is as follows. Co-chaperone that binds to the molecular chaperone Hsp70 and regulates Hsp70 ATPase activity. The protein is Small glutamine-rich tetratricopeptide repeat-containing protein 2 of Mycosarcoma maydis (Corn smut fungus).